The primary structure comprises 85 residues: Large ribosomal subunit protein bL31B (85 aa).

It belongs to the bacterial ribosomal protein bL31 family. Type B subfamily. As to quaternary structure, part of the 50S ribosomal subunit.

This is Large ribosomal subunit protein bL31B from Kocuria rhizophila (strain ATCC 9341 / DSM 348 / NBRC 103217 / DC2201).